We begin with the raw amino-acid sequence, 180 residues long: 3-hydroxyanthranilate 3,4-dioxygenase (180 aa).

Arginine 46 contacts O2. The Fe cation site is built by histidine 50, glutamate 56, and histidine 94. A substrate-binding site is contributed by glutamate 56. Positions 98 and 109 each coordinate substrate. Fe cation contacts are provided by cysteine 124, cysteine 127, cysteine 161, and cysteine 164.

The protein belongs to the 3-HAO family. Homodimer. It depends on Fe(2+) as a cofactor.

The catalysed reaction is 3-hydroxyanthranilate + O2 = (2Z,4Z)-2-amino-3-carboxymuconate 6-semialdehyde. The protein operates within cofactor biosynthesis; NAD(+) biosynthesis; quinolinate from L-kynurenine: step 3/3. Catalyzes the oxidative ring opening of 3-hydroxyanthranilate to 2-amino-3-carboxymuconate semialdehyde, which spontaneously cyclizes to quinolinate. The protein is 3-hydroxyanthranilate 3,4-dioxygenase of Jannaschia sp. (strain CCS1).